A 232-amino-acid chain; its full sequence is Large ribosomal subunit protein uL1 (232 aa).

The protein belongs to the universal ribosomal protein uL1 family. As to quaternary structure, part of the 50S ribosomal subunit.

Its function is as follows. Binds directly to 23S rRNA. The L1 stalk is quite mobile in the ribosome, and is involved in E site tRNA release. Protein L1 is also a translational repressor protein, it controls the translation of the L11 operon by binding to its mRNA. The protein is Large ribosomal subunit protein uL1 of Azorhizobium caulinodans (strain ATCC 43989 / DSM 5975 / JCM 20966 / LMG 6465 / NBRC 14845 / NCIMB 13405 / ORS 571).